Consider the following 480-residue polypeptide: Alpha-glucosidase (480 aa).

4-70 is an NAD(+) binding site; sequence VKIGIIGAGS…ADLKFEKTMN (67 aa). Residues aspartate 119 and asparagine 153 each contribute to the substrate site. Cysteine 174 contributes to the Mn(2+) binding site. Catalysis depends on histidine 175, which acts as the Proton donor. Histidine 203 is a binding site for Mn(2+). Aspartate 260 (proton acceptor) is an active-site residue.

This sequence belongs to the glycosyl hydrolase 4 family. Homodimer. It depends on NAD(+) as a cofactor. Mn(2+) serves as cofactor. Co(2+) is required as a cofactor. Requires Ni(2+) as cofactor.

The catalysed reaction is Hydrolysis of terminal, non-reducing (1-&gt;4)-linked alpha-D-glucose residues with release of alpha-D-glucose.. With respect to regulation, inhibited by Hg(2+) ion and EDTA. Functionally, alpha-glycosidase with a very broad specificity. Hydrolyzes maltose and other small maltooligosaccharides but is inactive against the polymeric substrate starch. AglA is not specific with respect to the configuration at the C-4 position of its substrates because glycosidic derivatives of D-galactose are also hydrolyzed. Does not cleave beta-glycosidic bonds. This chain is Alpha-glucosidase (aglA), found in Thermotoga maritima (strain ATCC 43589 / DSM 3109 / JCM 10099 / NBRC 100826 / MSB8).